The sequence spans 131 residues: UPF0102 protein YraN (131 aa).

The segment covering 1–19 (MATVPTRSGSPRQLTTKQT) has biased composition (polar residues). A disordered region spans residues 1 to 20 (MATVPTRSGSPRQLTTKQTG).

Belongs to the UPF0102 family.

In Escherichia coli O8 (strain IAI1), this protein is UPF0102 protein YraN.